A 1171-amino-acid chain; its full sequence is Protein diaphanous homolog 3 (1171 aa).

Residues methionine 1–serine 15 are compositionally biased toward basic and acidic residues. The segment at methionine 1–histidine 40 is disordered. Residues serine 16–leucine 39 carry the Nuclear localization signal motif. The residue at position 47 (threonine 47) is a Phosphothreonine. A Phosphoserine modification is found at serine 56. Residues proline 60–alanine 95 are disordered. Residues serine 76–serine 86 show a composition bias toward low complexity. The GBD/FH3 domain maps to proline 93 to aspartate 455. Position 154 is a phosphoserine (serine 154). Coiled coils occupy residues glutamate 373–leucine 403 and glutamine 478–leucine 533. The segment at alanine 532 to glycine 601 is disordered. The 71-residue stretch at proline 540–proline 610 folds into the FH1 domain. Over residues alanine 553–leucine 596 the composition is skewed to pro residues. Serine 604 carries the phosphoserine modification. One can recognise an FH2 domain in the interval proline 615 to arginine 1013. Coiled coils occupy residues aspartate 887–phenylalanine 918 and methionine 988–threonine 1038. The DAD domain occupies aspartate 1036–aspartate 1066. Phosphoserine occurs at positions 1072 and 1157. The Nuclear export signal signature appears at glutamate 1162–leucine 1171.

The protein belongs to the formin homology family. Diaphanous subfamily. Post-translationally, ubiquitinated.

Its subcellular location is the cytoplasm. It localises to the nucleus. Its function is as follows. Actin nucleation and elongation factor required for the assembly of F-actin structures, such as actin cables and stress fibers. Required for cytokinesis, stress fiber formation and transcriptional activation of the serum response factor. Binds to GTP-bound form of Rho and to profilin: acts in a Rho-dependent manner to recruit profilin to the membrane, where it promotes actin polymerization. DFR proteins couple Rho and Src tyrosine kinase during signaling and the regulation of actin dynamics. Also acts as an actin nucleation and elongation factor in the nucleus by promoting nuclear actin polymerization inside the nucleus to drive serum-dependent SRF-MRTFA activity. The polypeptide is Protein diaphanous homolog 3 (Diaph3) (Mus musculus (Mouse)).